The primary structure comprises 295 residues: Tyrosine recombinase XerD (295 aa).

The region spanning 1-85 (MNTIIEEYLN…TIRSFHQFAL (85 aa)) is the Core-binding (CB) domain. Residues 106–289 (KLPDVLEIDE…SKSQIRKMYT (184 aa)) form the Tyr recombinase domain. Residues arginine 146, lysine 170, histidine 241, arginine 244, and histidine 267 contribute to the active site. Tyrosine 276 (O-(3'-phospho-DNA)-tyrosine intermediate) is an active-site residue.

This sequence belongs to the 'phage' integrase family. XerD subfamily. In terms of assembly, forms a cyclic heterotetrameric complex composed of two molecules of XerC and two molecules of XerD.

It is found in the cytoplasm. Site-specific tyrosine recombinase, which acts by catalyzing the cutting and rejoining of the recombining DNA molecules. The XerC-XerD complex is essential to convert dimers of the bacterial chromosome into monomers to permit their segregation at cell division. It also contributes to the segregational stability of plasmids. The chain is Tyrosine recombinase XerD from Staphylococcus epidermidis (strain ATCC 35984 / DSM 28319 / BCRC 17069 / CCUG 31568 / BM 3577 / RP62A).